The primary structure comprises 278 residues: Large ribosomal subunit protein uL2 (278 aa).

A disordered region spans residues 201-278; sequence HGNINDGKAG…IMRSRHQKKK (78 aa). A compositionally biased stretch (basic residues) spans 210-221; the sequence is GRSRWRGKRPHV.

Belongs to the universal ribosomal protein uL2 family. As to quaternary structure, part of the 50S ribosomal subunit. Forms a bridge to the 30S subunit in the 70S ribosome.

Its function is as follows. One of the primary rRNA binding proteins. Required for association of the 30S and 50S subunits to form the 70S ribosome, for tRNA binding and peptide bond formation. It has been suggested to have peptidyltransferase activity; this is somewhat controversial. Makes several contacts with the 16S rRNA in the 70S ribosome. The chain is Large ribosomal subunit protein uL2 from Allorhizobium ampelinum (strain ATCC BAA-846 / DSM 112012 / S4) (Agrobacterium vitis (strain S4)).